The chain runs to 545 residues: Phenylalanine--tRNA ligase beta subunit (545 aa).

One can recognise a B5 domain in the interval 268-343 (FLHKIQNVRE…MSIGYNNLEP (76 aa)). Mg(2+) is bound by residues Asp-321, Asp-327, Glu-330, and Asp-331.

It belongs to the phenylalanyl-tRNA synthetase beta subunit family. Type 2 subfamily. As to quaternary structure, tetramer of two alpha and two beta subunits. Mg(2+) is required as a cofactor.

It localises to the cytoplasm. It carries out the reaction tRNA(Phe) + L-phenylalanine + ATP = L-phenylalanyl-tRNA(Phe) + AMP + diphosphate + H(+). This is Phenylalanine--tRNA ligase beta subunit from Saccharolobus islandicus (strain M.14.25 / Kamchatka #1) (Sulfolobus islandicus).